The primary structure comprises 173 residues: MLLFKDILTGDEMFTDSVKYKLVDDCIFEIECEHVTRKVGEVALDGANPSAEEVEEGTEEGTESGLDLVLNMRLVETGFSKTDYKNYLKTYTKALMDKWKEDGKSEAEVNEAKSKLTEAVKKVLPRIGDMQFFLGESSNPDGIVALLEYRPNKSGGETPVVMFFKHGLLEEKQ.

Positions 1 to 173 (MLLFKDILTG…FKHGLLEEKQ (173 aa)) constitute a TCTP domain.

The protein belongs to the TCTP family.

Its subcellular location is the cytoplasm. Its function is as follows. Involved in calcium binding and microtubule stabilization. The polypeptide is Translationally-controlled tumor protein homolog (Tctp) (Ixodes scapularis (Black-legged tick)).